The following is a 232-amino-acid chain: MDAREMKIKAAEAALAHVEDGMRLGIGTGSTAEEFVRLLAEKVAGGFRVEGVPTSERTARLCVELGVPLKSLDELPALDLTVDGADEVDPALRLIKGGGGALLREKIVAAASERMIVIADESKLVDTLGAYALPIEVNPFGLVSTRIAIEKVAARLGLSGELSLRQSGDGEFTTDGGHHIIDASFGRIPDAEALSSELNSIPGVVEHGLFINMAALAIIAGPAGARTLQANR.

Substrate contacts are provided by residues T28–T31, D83–D86, and K96–G99. The active-site Proton acceptor is the E105. Position 123 (K123) interacts with substrate.

It belongs to the ribose 5-phosphate isomerase family. In terms of assembly, homodimer.

It catalyses the reaction aldehydo-D-ribose 5-phosphate = D-ribulose 5-phosphate. It functions in the pathway carbohydrate degradation; pentose phosphate pathway; D-ribose 5-phosphate from D-ribulose 5-phosphate (non-oxidative stage): step 1/1. Its function is as follows. Catalyzes the reversible conversion of ribose-5-phosphate to ribulose 5-phosphate. The sequence is that of Ribose-5-phosphate isomerase A from Rhizobium etli (strain CIAT 652).